Consider the following 240-residue polypeptide: Probable transcriptional regulatory protein VFMJ11_A0186 (240 aa).

This sequence belongs to the TACO1 family.

It localises to the cytoplasm. This Aliivibrio fischeri (strain MJ11) (Vibrio fischeri) protein is Probable transcriptional regulatory protein VFMJ11_A0186.